Consider the following 775-residue polypeptide: Venom dipeptidyl peptidase 4 (775 aa).

The N-terminal stretch at 1 to 23 is a signal peptide; it reads MEVLVQLALLLVVHGSLVVLVAG. 2 N-linked (GlcNAc...) asparagine glycosylation sites follow: N68 and N239. Cystine bridges form between C450/C453 and C463/C481. N473, N505, N578, and N631 each carry an N-linked (GlcNAc...) asparagine glycan. Catalysis depends on S639, which acts as the Charge relay system. C659 and C770 are oxidised to a cystine. N-linked (GlcNAc...) asparagine glycosylation is found at N689 and N694. Catalysis depends on charge relay system residues D718 and H750.

Belongs to the peptidase S9B family. DPPIV subfamily. As to expression, expressed by the venom duct.

It localises to the secreted. The catalysed reaction is Release of an N-terminal dipeptide, Xaa-Yaa-|-Zaa-, from a polypeptide, preferentially when Yaa is Pro, provided Zaa is neither Pro nor hydroxyproline.. Inhibited by diprotin A. Functionally, venom dipeptidyl-peptidase which removes N-terminal dipeptides sequentially from polypeptides having unsubstituted N-termini provided that the penultimate residue is proline. May process promelittin into its active form and/or modulate the chemotactic activity of immune cells after the insect sting. The polypeptide is Venom dipeptidyl peptidase 4 (Apis mellifera (Honeybee)).